Here is an 829-residue protein sequence, read N- to C-terminus: Periplasmic nitrate reductase (829 aa).

The tat-type signal signal peptide spans 1–27 (MNRRDFMKANAVIAAASAAGLALPAGA). A 4Fe-4S Mo/W bis-MGD-type domain is found at 39 to 95 (LEWNKAPCRFCGTGCSVMVATREGKVVATHGDANSEVNRGLSCIKGYFLSKIMYGRD). 4 residues coordinate [4Fe-4S] cluster: Cys46, Cys49, Cys53, and Cys81. Mo-bis(molybdopterin guanine dinucleotide) contacts are provided by residues Lys83, Gln150, Asn175, Cys179, 212 to 219 (WGSNMAEM), 243 to 247 (STFEH), 262 to 264 (QTD), Met373, Gln377, Asn483, 509 to 510 (SD), Lys532, Asp559, and 719 to 728 (TGRVLEHWHS). Trp795 is a binding site for substrate. Mo-bis(molybdopterin guanine dinucleotide) is bound by residues Asn803 and Lys820.

This sequence belongs to the prokaryotic molybdopterin-containing oxidoreductase family. NasA/NapA/NarB subfamily. In terms of assembly, component of the periplasmic nitrate reductase NapAB complex composed of NapA and NapB. [4Fe-4S] cluster is required as a cofactor. The cofactor is Mo-bis(molybdopterin guanine dinucleotide). Predicted to be exported by the Tat system. The position of the signal peptide cleavage has not been experimentally proven.

The protein localises to the periplasm. The catalysed reaction is 2 Fe(II)-[cytochrome] + nitrate + 2 H(+) = 2 Fe(III)-[cytochrome] + nitrite + H2O. Catalytic subunit of the periplasmic nitrate reductase complex NapAB. Receives electrons from NapB and catalyzes the reduction of nitrate to nitrite. The sequence is that of Periplasmic nitrate reductase from Shewanella denitrificans (strain OS217 / ATCC BAA-1090 / DSM 15013).